The sequence spans 72 residues: Protein kish-A (72 aa).

The signal sequence occupies residues 1–26 (MSAIFNFQSLLIVILLLICTCAYLRA). Residues 27-53 (LVPNLLDKNKTGILGIFWKCARIGERK) lie on the Extracellular side of the membrane. An N-linked (GlcNAc...) asparagine glycan is attached at Asn35. A helical transmembrane segment spans residues 54–71 (SPYVAVCCVVMAFSILFM). A topological domain (cytoplasmic) is located at residue Gln72.

It belongs to the KISH family.

It localises to the golgi apparatus membrane. Involved in the early part of the secretory pathway. This chain is Protein kish-A (tmem167a), found in Xenopus tropicalis (Western clawed frog).